The following is a 255-amino-acid chain: Hydroxyacylglutathione hydrolase (255 aa).

Residues histidine 56, histidine 58, aspartate 60, histidine 61, histidine 112, aspartate 129, and histidine 167 each coordinate Zn(2+).

Belongs to the metallo-beta-lactamase superfamily. Glyoxalase II family. As to quaternary structure, monomer. Zn(2+) is required as a cofactor.

The catalysed reaction is an S-(2-hydroxyacyl)glutathione + H2O = a 2-hydroxy carboxylate + glutathione + H(+). Its pathway is secondary metabolite metabolism; methylglyoxal degradation; (R)-lactate from methylglyoxal: step 2/2. Functionally, thiolesterase that catalyzes the hydrolysis of S-D-lactoyl-glutathione to form glutathione and D-lactic acid. In Pseudomonas fluorescens (strain SBW25), this protein is Hydroxyacylglutathione hydrolase.